A 94-amino-acid chain; its full sequence is Large ribosomal subunit protein uL23 (94 aa).

This sequence belongs to the universal ribosomal protein uL23 family. As to quaternary structure, part of the 50S ribosomal subunit. Contacts protein L29, and trigger factor when it is bound to the ribosome.

One of the early assembly proteins it binds 23S rRNA. One of the proteins that surrounds the polypeptide exit tunnel on the outside of the ribosome. Forms the main docking site for trigger factor binding to the ribosome. This chain is Large ribosomal subunit protein uL23, found in Dehalococcoides mccartyi (strain ATCC BAA-2266 / KCTC 15142 / 195) (Dehalococcoides ethenogenes (strain 195)).